Here is a 121-residue protein sequence, read N- to C-terminus: Putative iron-sulfur cluster insertion protein ErpA (121 aa).

Iron-sulfur cluster-binding residues include Cys-49, Cys-113, and Cys-115.

The protein belongs to the HesB/IscA family. As to quaternary structure, homodimer. Requires iron-sulfur cluster as cofactor.

Required for insertion of 4Fe-4S clusters. This Nitrosomonas europaea (strain ATCC 19718 / CIP 103999 / KCTC 2705 / NBRC 14298) protein is Putative iron-sulfur cluster insertion protein ErpA.